The following is a 161-amino-acid chain: MTKGPIRLDVAVSYALPRAGLPSAVSFRKWVAAALKGRIREADLAVRLVDEKEGCSLNHHYRGKDYATNVLSFPAELPEGLPKGIKMPLLGDLVICAPVVAREAAEQGKSLAAHYAHLTVHGTLHLLGWDHDDDKEADAMEQLEREILADLGIDDPYAGEQ.

Residues His-121, His-125, and His-131 each contribute to the Zn(2+) site.

It belongs to the endoribonuclease YbeY family. It depends on Zn(2+) as a cofactor.

It localises to the cytoplasm. Single strand-specific metallo-endoribonuclease involved in late-stage 70S ribosome quality control and in maturation of the 3' terminus of the 16S rRNA. This is Endoribonuclease YbeY from Xanthomonas oryzae pv. oryzae (strain MAFF 311018).